Reading from the N-terminus, the 284-residue chain is 2-dehydro-3-deoxyphosphooctonate aldolase (284 aa).

This sequence belongs to the KdsA family.

The protein resides in the cytoplasm. It catalyses the reaction D-arabinose 5-phosphate + phosphoenolpyruvate + H2O = 3-deoxy-alpha-D-manno-2-octulosonate-8-phosphate + phosphate. It functions in the pathway carbohydrate biosynthesis; 3-deoxy-D-manno-octulosonate biosynthesis; 3-deoxy-D-manno-octulosonate from D-ribulose 5-phosphate: step 2/3. It participates in bacterial outer membrane biogenesis; lipopolysaccharide biosynthesis. The protein is 2-dehydro-3-deoxyphosphooctonate aldolase of Actinobacillus pleuropneumoniae serotype 7 (strain AP76).